A 585-amino-acid polypeptide reads, in one-letter code: ATP-dependent lipid A-core flippase (585 aa).

6 helical membrane passes run 25–45 (FLAA…FPAI), 63–83 (WLFY…FGFL), 127–146 (IAYD…TSLI), 150–170 (LSIV…TLIT), 250–270 (QSPL…GVAL), and 277–297 (QTTV…MAPL). The ABC transmembrane type-1 domain maps to 26–309 (LAALACMGVA…VTDVNAPIQR (284 aa)). Residues 341–577 (VEFDGVTFTY…DGLYARLYRM (237 aa)) form the ABC transporter domain. Residue 375–382 (GPSGSGKT) coordinates ATP.

The protein belongs to the ABC transporter superfamily. Lipid exporter (TC 3.A.1.106) family. As to quaternary structure, homodimer.

The protein resides in the cell inner membrane. The catalysed reaction is ATP + H2O + lipid A-core oligosaccharideSide 1 = ADP + phosphate + lipid A-core oligosaccharideSide 2.. In terms of biological role, involved in lipopolysaccharide (LPS) biosynthesis. Translocates lipid A-core from the inner to the outer leaflet of the inner membrane. Transmembrane domains (TMD) form a pore in the inner membrane and the ATP-binding domain (NBD) is responsible for energy generation. This is ATP-dependent lipid A-core flippase from Dechloromonas aromatica (strain RCB).